A 241-amino-acid chain; its full sequence is Large ribosomal subunit protein uL30 (241 aa).

A disordered region spans residues 1-32; it reads MATTLKPETLQKKEKAQQKTAEERAAAKKVRK. The span at 9-26 shows a compositional bias: basic and acidic residues; sequence TLQKKEKAQQKTAEERAA.

The protein belongs to the universal ribosomal protein uL30 family. In terms of assembly, component of the large ribosomal subunit. Mature ribosomes consist of a small (40S) and a large (60S) subunit. The 40S subunit contains about 32 different proteins and 1 molecule of RNA (18S). The 60S subunit contains 45 different proteins and 3 molecules of RNA (25S, 5.8S and 5S).

The protein resides in the cytoplasm. Component of the ribosome, a large ribonucleoprotein complex responsible for the synthesis of proteins in the cell. The small ribosomal subunit (SSU) binds messenger RNAs (mRNAs) and translates the encoded message by selecting cognate aminoacyl-transfer RNA (tRNA) molecules. The large subunit (LSU) contains the ribosomal catalytic site termed the peptidyl transferase center (PTC), which catalyzes the formation of peptide bonds, thereby polymerizing the amino acids delivered by tRNAs into a polypeptide chain. The nascent polypeptides leave the ribosome through a tunnel in the LSU and interact with protein factors that function in enzymatic processing, targeting, and the membrane insertion of nascent chains at the exit of the ribosomal tunnel. The polypeptide is Large ribosomal subunit protein uL30 (Candida albicans (strain SC5314 / ATCC MYA-2876) (Yeast)).